The chain runs to 2170 residues: MKRKERIARRLEGIENDSQPILLQSCTGLVTHRLLEEDTPRYMRATDPASPHIGRSKEEEDTPGSSLEKQTPSKYCIETSGIHSSGSMDTHSLESKAERIARYKAERRRQLAEKYGLTLDPEADSEYLSRYAKSRKDPDVTERRGKSDKQEEQSKDANSRHSRTESGPRTSLVASQDCTPLGSNMSDQEQLLNVENQRRVQDPPLGEDGSSAFFSERSISFPEVPRSPKQIPSSPLQQPASPNHPGDSPLPTEARASTGKPTHEWFLQRDSEGDTPSLINWPSRVKVREKLVKEESARSSPELTSESLTQRRQQPAPAHFLPIQSESSTFDRVTSKAVSSLQPSQSGVLPTDPVHAIKLVTMDTPESTSEFSWVGSATPKVIKSTTLKILEGGSRDAPVLHICESKAEDWLSPEPLERSPKSLLTSEDDRLVRGHKDPSGNKDLDKAIICSIDVESERERQVQHLPTQRTGRSEMLLYVQSGPVSQDATLTSHTKEASPKKRKVLARSLSDYTGPPQLQVPRHKDEAPSQELELQSSRAEGPGAEASVLDTRVSVAQLRNIFMESTRASKKPELQSRVERSAEGIGLPMERERGSRKPRRYLSPGESRKTSERFRTQPITSAERKESDRYPSGSEIPVVEDEEKVDERAKLSVAAKRLLFREMEKSFDEHTVPKRHSRNAAVEQRLRRLQDRSHTQPITTEEVVIAATEPIPASCSGVTHPVTARLPSPTVARSSVQPARLQASAHQKALARDQANEGRESAEPGEPDSSTLSLAEKLALFNKLSQPVSKAISTRNRIDVRQRRMNARYQTQPVTLGEVEQVQSGKLISFSPTVNTSVSIMASAVAPTYAGDLRKLSVDNNTSATDYKSPPAENSDSPVRSILKPQAWRPLVEHSGSKGMPGESGKTESKNALTVAAEDSGVQTRGAFEEEEEPSYPILGRVREGDGQKEPKHVVLRRGSLELGNPSAAHLGDELKEVSTAKSSLQENLDLKDKQASEENTDVETVMRKFSLKEFGETTSEQTEVAARKASVQMATPGAWKQQESSEQLAEKLFKNPCAMFASGEVKVPVGDSFLDSPSKTMSIKERLALLKKSGEEDWKNRLIRKQEYGKATGGLHTQEVEQSLKKKRVTESRESQMTIEERKHLITVREEAWKTKGRGAANDSTQFTVAGRMVKKGLASPTSITPISSPLCSKSRGTTPVSKPLEDIEARPDMQLESDLKLDRLETFLRRLNNKVAGIQETVLTVTGKSVKEVMKLDDDETFAKFYRSVDHSIPRSPVELEEDFDVIFDPYAPKLTSSVAEHKRQVRPKRRVQASKNPLKLLAARDDLLQEYTEQRLNVAFMESKRMKVEKMSSNSNFSEVTLAGLASRENFSNINLRSVNLMEQNSNNSAMPYKKLMLLQIKGRRHVQTRLVEPRASSLNSGDCFLLLSPQYCFLWVGEFSNVIEKAKASELATLIQTKRELGCRATYIQTIEEGINTHTHAAKDFWKLLGGQTSYQSAGDPKEDELYETAIIETNCVYRLTDDKLVPDDDYWGKIPKCSLLQSKEVLVFDFGSEVYVWHGKEVTLAQRKIAFQLAKHLWNGTFDYENCDINPLDPGECNPLIPRKGQGRPDWAIFGRVTEHNETILFKEKFLDWTELKRPTEKNSGEVVQQKDDPRADVKPYDVTRMVATPQITAGTILDGVNVGRGYGLVEGDDRRQFEIATVSVDVWHILEFDYSRLPRQSIGQFHEGDAYVVKWKYMASTAVGSRQKGEHLVRVAGKEKCVYFFWQGRHSTVSEKGTSALMTVELDEERGAQVQVLQGKEPPCFLQCFQGGMVVHSGRREEEEENVQSEWRLYCVRGEVPMEGNLLEVACHCSSLRSRTSMVVLNINKALIYLWHGCKAQGHTKEVGRTAANKIKEECPLEAGLHSSSNVTIHECDEGSEPLGFWDALGRRDRKAYDCMLQDPGSFNFAPRLFILSSSSGDFSATEFVYPAQAPSAVSSMPFLQEDLYSAPQPALFLVDNHHEVYLWQGWWPTENKITGSARIRWASDRKSAMETVLQYCRGKNLKRPPPKSYLIHAGLEPLTFTNMFPSWEHREDIAEITEMDTEVSNQITLVEDVLAKLCKTIYPLADLLARPLPEGVDPLKLEIYLTDEDFEFALDMSRDEFNALPTWKQVNLKKSKGLF.

The interaction with MYLK stretch occupies residues 1 to 167 (MKRKERIARR…NSRHSRTESG (167 aa)). Disordered stretches follow at residues 37–94 (EDTP…HSLE), 107–327 (RRRQ…QSES), 413–444 (PEPL…NKDL), 511–546 (DYTG…GAEA), and 567–643 (RASK…EDEE). S50 is modified (phosphoserine). Polar residues-rich tracts occupy residues 63–73 (PGSSLEKQTPS) and 81–90 (GIHSSGSMDT). Residues 134–166 (SRKDPDVTERRGKSDKQEEQSKDANSRHSRTES) show a composition bias toward basic and acidic residues. Positions 167–195 (GPRTSLVASQDCTPLGSNMSDQEQLLNVE) are enriched in polar residues. A phosphoserine mark is found at S220, S227, and S241. The span at 230-241 (QIPSSPLQQPAS) shows a compositional bias: polar residues. Basic and acidic residues-rich tracts occupy residues 261–272 (PTHEWFLQRDSE) and 286–297 (KVREKLVKEESA). Over residues 298–313 (RSSPELTSESLTQRRQ) the composition is skewed to polar residues. S299 and S300 each carry phosphoserine. The segment covering 427-444 (EDDRLVRGHKDPSGNKDL) has biased composition (basic and acidic residues). Basic and acidic residues-rich tracts occupy residues 570–582 (KKPE…ERSA) and 606–615 (ESRKTSERFR). Residues S632, S666, S728, and S761 each carry the phosphoserine modification. Residues 743-771 (ASAHQKALARDQANEGRESAEPGEPDSST) form a disordered region. Over residues 750–762 (LARDQANEGRESA) the composition is skewed to basic and acidic residues. Residue Y809 is modified to Phosphotyrosine. T811 carries the phosphothreonine modification. Phosphoserine is present on residues S857, S877, and S881. The disordered stretch occupies residues 887–909 (AWRPLVEHSGSKGMPGESGKTES). Phosphoserine occurs at positions 960, 1011, 1031, and 1077. Residues 1117–1137 (HTQEVEQSLKKKRVTESRESQ) are disordered. Positions 1119 to 1137 (QEVEQSLKKKRVTESRESQ) are enriched in basic and acidic residues. R1159 is subject to Omega-N-methylarginine. A phosphoserine mark is found at S1181 and S1184. The residue at position 1186 (T1186) is a Phosphothreonine. A phosphoserine mark is found at S1190, S1278, and S1361. Residues 1375–1643 (SNINLRSVNL…KFLDWTELKR (269 aa)) are interaction with NEB. Gelsolin-like repeat units lie at residues 1397-1496 (KKLM…LGGQ), 1516-1638 (IETN…FLDW), 1708-1818 (VSVD…FQGG), 1837-1938 (WRLY…LGRR), and 1971-2078 (ATEF…FPSW). Residues 2107-2170 (KLCKTIYPLA…VNLKKSKGLF (64 aa)) form the HP domain.

It belongs to the villin/gelsolin family. As to quaternary structure, associates with F-actin. Interacts with NEB. Interacts with MYH9. Interacts with MYLK. Interacts with TASOR. In terms of assembly, interacts with TRIP6. Interacts with DYNLT1. Interacts with KIF14; at midbody during cytokinesis. As to expression, expressed in the heart, tongue and granular cells within the cerebellum.

It localises to the cell membrane. It is found in the cytoplasm. Its subcellular location is the cytoskeleton. The protein resides in the cell projection. The protein localises to the invadopodium. It localises to the podosome. It is found in the midbody. Its subcellular location is the cleavage furrow. Functionally, forms a high-affinity link between the actin cytoskeleton and the membrane. Is among the first costameric proteins to assemble during myogenesis and it contributes to myogenic membrane structure and differentiation. Appears to be involved in myosin II assembly. May modulate myosin II regulation through MLCK during cell spreading, an initial step in cell migration. May play a role in invadopodial function. In terms of biological role, may be involved in modulation of focal adhesions. Supervillin-mediated down-regulation of focal adhesions involves binding to TRIP6. Plays a role in cytokinesis through KIF14 interaction. This chain is Supervillin (Svil), found in Mus musculus (Mouse).